The following is a 155-amino-acid chain: MTQHSSAQNAVDLYTDGACSGNPGPGGWGVVLRYGHHEREMYGGETATTNNKMELTAVIEGLAALTRPVPLVRIHTDSTYVLKGITEWMRGWKRNGWLTSAKQPVKNADLWRRLDQECGRHGEITWEWVKGHAGHPENERADKLACKGRDEAKKS.

One can recognise an RNase H type-1 domain in the interval 7–150 (AQNAVDLYTD…ADKLACKGRD (144 aa)). Mg(2+)-binding residues include aspartate 16, glutamate 54, aspartate 77, and aspartate 142.

It belongs to the RNase H family. As to quaternary structure, monomer. Requires Mg(2+) as cofactor.

Its subcellular location is the cytoplasm. The enzyme catalyses Endonucleolytic cleavage to 5'-phosphomonoester.. Endonuclease that specifically degrades the RNA of RNA-DNA hybrids. The protein is Ribonuclease H of Saccharopolyspora erythraea (strain ATCC 11635 / DSM 40517 / JCM 4748 / NBRC 13426 / NCIMB 8594 / NRRL 2338).